We begin with the raw amino-acid sequence, 131 residues long: Putative pre-16S rRNA nuclease (131 aa).

The protein belongs to the YqgF nuclease family.

It localises to the cytoplasm. In terms of biological role, could be a nuclease involved in processing of the 5'-end of pre-16S rRNA. This chain is Putative pre-16S rRNA nuclease, found in Bordetella petrii (strain ATCC BAA-461 / DSM 12804 / CCUG 43448).